A 157-amino-acid chain; its full sequence is 2-C-methyl-D-erythritol 2,4-cyclodiphosphate synthase (157 aa).

Residues aspartate 8 and histidine 10 each contribute to the a divalent metal cation site. Residues 8–10 (DVH) and 34–35 (HS) each bind 4-CDP-2-C-methyl-D-erythritol 2-phosphate. Histidine 42 serves as a coordination point for a divalent metal cation. Residues 56-58 (DIG), 132-135 (TTNE), and arginine 142 each bind 4-CDP-2-C-methyl-D-erythritol 2-phosphate.

It belongs to the IspF family. In terms of assembly, homotrimer. The cofactor is a divalent metal cation.

It carries out the reaction 4-CDP-2-C-methyl-D-erythritol 2-phosphate = 2-C-methyl-D-erythritol 2,4-cyclic diphosphate + CMP. The protein operates within isoprenoid biosynthesis; isopentenyl diphosphate biosynthesis via DXP pathway; isopentenyl diphosphate from 1-deoxy-D-xylulose 5-phosphate: step 4/6. Involved in the biosynthesis of isopentenyl diphosphate (IPP) and dimethylallyl diphosphate (DMAPP), two major building blocks of isoprenoid compounds. Catalyzes the conversion of 4-diphosphocytidyl-2-C-methyl-D-erythritol 2-phosphate (CDP-ME2P) to 2-C-methyl-D-erythritol 2,4-cyclodiphosphate (ME-CPP) with a corresponding release of cytidine 5-monophosphate (CMP). The protein is 2-C-methyl-D-erythritol 2,4-cyclodiphosphate synthase of Prosthecochloris aestuarii (strain DSM 271 / SK 413).